Reading from the N-terminus, the 404-residue chain is Argininosuccinate synthase (404 aa).

ATP-binding positions include 13–21 and Ala-41; that span reads AYSGGLDTS. Positions 93 and 98 each coordinate L-citrulline. Gly-123 is a binding site for ATP. L-aspartate is bound by residues Thr-125, Asn-129, and Asp-130. L-citrulline is bound at residue Asn-129. L-citrulline-binding residues include Arg-133, Ser-182, Ser-191, Glu-267, and Tyr-279.

This sequence belongs to the argininosuccinate synthase family. Type 1 subfamily. In terms of assembly, homotetramer.

It localises to the cytoplasm. It carries out the reaction L-citrulline + L-aspartate + ATP = 2-(N(omega)-L-arginino)succinate + AMP + diphosphate + H(+). It participates in amino-acid biosynthesis; L-arginine biosynthesis; L-arginine from L-ornithine and carbamoyl phosphate: step 2/3. This chain is Argininosuccinate synthase, found in Moritella profunda.